Here is a 145-residue protein sequence, read N- to C-terminus: D-aminoacyl-tRNA deacylase (145 aa).

The short motif at 137–138 (GP) is the Gly-cisPro motif, important for rejection of L-amino acids element.

The protein belongs to the DTD family. In terms of assembly, homodimer.

Its subcellular location is the cytoplasm. It carries out the reaction glycyl-tRNA(Ala) + H2O = tRNA(Ala) + glycine + H(+). It catalyses the reaction a D-aminoacyl-tRNA + H2O = a tRNA + a D-alpha-amino acid + H(+). Functionally, an aminoacyl-tRNA editing enzyme that deacylates mischarged D-aminoacyl-tRNAs. Also deacylates mischarged glycyl-tRNA(Ala), protecting cells against glycine mischarging by AlaRS. Acts via tRNA-based rather than protein-based catalysis; rejects L-amino acids rather than detecting D-amino acids in the active site. By recycling D-aminoacyl-tRNA to D-amino acids and free tRNA molecules, this enzyme counteracts the toxicity associated with the formation of D-aminoacyl-tRNA entities in vivo and helps enforce protein L-homochirality. This chain is D-aminoacyl-tRNA deacylase, found in Erwinia tasmaniensis (strain DSM 17950 / CFBP 7177 / CIP 109463 / NCPPB 4357 / Et1/99).